The sequence spans 189 residues: Peptide deformylase (189 aa).

Residues Cys98 and His140 each coordinate Fe cation. Glu141 is an active-site residue. His144 is a binding site for Fe cation.

The protein belongs to the polypeptide deformylase family. It depends on Fe(2+) as a cofactor.

The catalysed reaction is N-terminal N-formyl-L-methionyl-[peptide] + H2O = N-terminal L-methionyl-[peptide] + formate. Removes the formyl group from the N-terminal Met of newly synthesized proteins. Requires at least a dipeptide for an efficient rate of reaction. N-terminal L-methionine is a prerequisite for activity but the enzyme has broad specificity at other positions. This chain is Peptide deformylase, found in Porphyromonas gingivalis (strain ATCC 33277 / DSM 20709 / CIP 103683 / JCM 12257 / NCTC 11834 / 2561).